The following is a 461-amino-acid chain: tRNA modification GTPase MnmE (461 aa).

(6S)-5-formyl-5,6,7,8-tetrahydrofolate contacts are provided by Arg27, Glu89, and Arg128. The TrmE-type G domain occupies 224–382 (GLATAIVGRP…LEELINKLFF (159 aa)). Asn234 lines the K(+) pocket. GTP contacts are provided by residues 234–239 (NVGKSS), 253–259 (TDVAGTT), and 278–281 (DTAG). Residue Ser238 coordinates Mg(2+). K(+) is bound by residues Thr253, Val255, and Thr258. Thr259 lines the Mg(2+) pocket. Lys461 is a binding site for (6S)-5-formyl-5,6,7,8-tetrahydrofolate.

Belongs to the TRAFAC class TrmE-Era-EngA-EngB-Septin-like GTPase superfamily. TrmE GTPase family. Homodimer. Heterotetramer of two MnmE and two MnmG subunits. The cofactor is K(+).

It is found in the cytoplasm. Its function is as follows. Exhibits a very high intrinsic GTPase hydrolysis rate. Involved in the addition of a carboxymethylaminomethyl (cmnm) group at the wobble position (U34) of certain tRNAs, forming tRNA-cmnm(5)s(2)U34. This chain is tRNA modification GTPase MnmE, found in Lactobacillus helveticus (strain DPC 4571).